A 297-amino-acid polypeptide reads, in one-letter code: Nuclear transcription factor Y subunit B-11 (297 aa).

Residues 1 to 25 (MKSRKSYGHLLSPVGSPPLDNESGE) are disordered. Residues 63–69 (LPIANVS) mediate DNA binding. Residues 90–101 (VQECVSEFISFV) form a subunit association domain (SAD) region.

This sequence belongs to the NFYB/HAP3 subunit family. As to quaternary structure, heterotrimeric transcription factor composed of three components, NF-YA, NF-YB and NF-YC. NF-YB and NF-YC must interact and dimerize for NF-YA association and DNA binding. Interacts with NFYC2, NFYC4 and NFYC6. In terms of tissue distribution, expressed in roots, culms, nodes, leaf blades, leaf sheaths and young panicles.

It localises to the nucleus. Its subcellular location is the cytoplasm. Functionally, probable transcription factor involved in the regulation of flowering time under long day (LD) conditions. Functions as a repressor of flowering, independently of HD1 and GHD7. Controls flowering time by negatively regulating the expression of EHD1 and HD3A. Regulates plant height by promoting cell elongation in the internodes. Component of the NF-Y/HAP transcription factor complex. The polypeptide is Nuclear transcription factor Y subunit B-11 (HD5) (Oryza sativa subsp. japonica (Rice)).